The sequence spans 74 residues: Exodeoxyribonuclease 7 small subunit (74 aa).

It belongs to the XseB family. As to quaternary structure, heterooligomer composed of large and small subunits.

It is found in the cytoplasm. The enzyme catalyses Exonucleolytic cleavage in either 5'- to 3'- or 3'- to 5'-direction to yield nucleoside 5'-phosphates.. Functionally, bidirectionally degrades single-stranded DNA into large acid-insoluble oligonucleotides, which are then degraded further into small acid-soluble oligonucleotides. This Neisseria meningitidis serogroup C / serotype 2a (strain ATCC 700532 / DSM 15464 / FAM18) protein is Exodeoxyribonuclease 7 small subunit.